The following is a 203-amino-acid chain: uncharacterized protein (203 aa).

The segment at 1–23 (MGSSFVIDRSSSSPAPPRGPAPK) is disordered.

This is an uncharacterized protein from Saccharomyces cerevisiae (strain ATCC 204508 / S288c) (Baker's yeast).